The chain runs to 374 residues: NAD-capped RNA hydrolase ndx-9 (374 aa).

Zn(2+) contacts are provided by cysteine 181, cysteine 184, cysteine 199, and cysteine 202. Substrate contacts are provided by residues tyrosine 207, 243–245 (AGF), glutamate 259, glutamate 263, and glutamate 307. A Nudix hydrolase domain is found at 208 to 336 (PTFSPVSITL…LADPLLKNLP (129 aa)). Mg(2+) is bound by residues alanine 243, glutamate 259, glutamate 263, and glutamate 307. A Nudix box motif is present at residues 244 to 265 (GFAHSGESMAECARREIAEEVG). The Microbody targeting signal motif lies at 367-369 (LEN).

Belongs to the Nudix hydrolase family. NudC subfamily. In terms of assembly, homodimer. Mg(2+) is required as a cofactor. Mn(2+) serves as cofactor. It depends on Zn(2+) as a cofactor.

It catalyses the reaction a 5'-end NAD(+)-phospho-ribonucleoside in mRNA + H2O = a 5'-end phospho-adenosine-phospho-ribonucleoside in mRNA + beta-nicotinamide D-ribonucleotide + 2 H(+). The enzyme catalyses NAD(+) + H2O = beta-nicotinamide D-ribonucleotide + AMP + 2 H(+). It carries out the reaction NADH + H2O = reduced beta-nicotinamide D-ribonucleotide + AMP + 2 H(+). Functionally, mRNA decapping enzyme that specifically removes the nicotinamide adenine dinucleotide (NAD) cap from a subset of mRNAs by hydrolyzing the diphosphate linkage to produce nicotinamide mononucleotide (NMN) and 5' monophosphate mRNA. The NAD-cap is present at the 5'-end of some RNAs; in contrast to the canonical N7 methylguanosine (m7G) cap, the NAD cap promotes mRNA decay. Mediates the hydrolysis of some nucleoside diphosphate derivatives. The sequence is that of NAD-capped RNA hydrolase ndx-9 (ndx-9) from Caenorhabditis elegans.